A 310-amino-acid chain; its full sequence is Acetaldehyde dehydrogenase 1 (310 aa).

Residue 12–15 participates in NAD(+) binding; the sequence is SGNI. Cysteine 132 serves as the catalytic Acyl-thioester intermediate. Residues 163 to 171 and asparagine 287 each bind NAD(+); that span reads SAGPGTRAN.

This sequence belongs to the acetaldehyde dehydrogenase family.

The catalysed reaction is acetaldehyde + NAD(+) + CoA = acetyl-CoA + NADH + H(+). This Pseudomonas putida (strain W619) protein is Acetaldehyde dehydrogenase 1.